The chain runs to 2167 residues: GTPase-activating protein BEM2/IPL2 (2167 aa).

Disordered regions lie at residues 1–209, 243–305, and 353–372; these read MKGL…NDNE, TNYN…ASAR, and NSSIANENHQQKKQQTNNQA. The span at 12–51 shows a compositional bias: low complexity; it reads SSTASASSSSTSTSHKTTTASTASSSSPSSSSQTIRNSTS. K27 participates in a covalent cross-link: Glycyl lysine isopeptide (Lys-Gly) (interchain with G-Cter in ubiquitin). Residues 58–70 show a composition bias toward basic residues; that stretch reads HSHHHHGQGHSHH. Residues 89–118 show a composition bias toward polar residues; that stretch reads KQYTSTSSSQVNLGMYHSDTNTRSSRSIAS. S129 bears the Phosphoserine mark. The segment covering 134–145 has biased composition (polar residues); sequence SNSSSQKSNAQD. 2 stretches are compositionally biased toward low complexity: residues 160–177 and 187–207; these read SLLPSRSSSLSPPQSRCS and NTSGISNSSGTNNNNSNNNND. The segment covering 243 to 252 has biased composition (polar residues); the sequence is TNYNSSMTAP. S283 bears the Phosphoserine mark. Over residues 289 to 300 the composition is skewed to low complexity; that stretch reads SSSTTATNSGND. In terms of domain architecture, Ras-GEF spans 592–859; sequence DITTLADEVH…MKLSVQHEPP (268 aa). 2 positions are modified to phosphoserine: S1012 and S1016. T1038 carries the post-translational modification Phosphothreonine. Phosphoserine is present on residues S1046, S1054, and S1128. The segment covering 1771-1794 has biased composition (polar residues); the sequence is ISGTHSDNDHSYNINKNTGQTPSL. Positions 1771–1828 are disordered; sequence ISGTHSDNDHSYNINKNTGQTPSLGSVMESNNSARNRRDSRASFSTNRSSVVSNSSHN. The segment covering 1812–1828 has biased composition (low complexity); it reads ASFSTNRSSVVSNSSHN. Positions 1846-1948 constitute a PH domain; the sequence is GFNTSSSNYS…WIKMIKASKR (103 aa). The region spanning 1967–2165 is the Rho-GAP domain; that stretch reads VPLEDVCERE…DFIKNPNDYF (199 aa).

In terms of biological role, GTPase-activating protein (GAP) for RHO1 and RHO2. Involved in the control of cellular morphogenesis. Required for proper bud site selection and bud emergence. The sequence is that of GTPase-activating protein BEM2/IPL2 (BEM2) from Saccharomyces cerevisiae (strain ATCC 204508 / S288c) (Baker's yeast).